The following is a 352-amino-acid chain: uncharacterized protein (352 aa).

The first 22 residues, 1–22, serve as a signal peptide directing secretion; that stretch reads MAIYLDKLKMPIIIGLIVLIIA.

Belongs to the bacterial solute-binding protein 1 family. WtpA subfamily.

This is an uncharacterized protein from Staphylothermus marinus (strain ATCC 43588 / DSM 3639 / JCM 9404 / F1).